Reading from the N-terminus, the 493-residue chain is 3-octaprenyl-4-hydroxybenzoate carboxy-lyase (493 aa).

N177 lines the Mn(2+) pocket. Prenylated FMN is bound by residues 180–182 (IYR), 194–196 (RWL), and 199–200 (RG). A Mn(2+)-binding site is contributed by E243. D292 acts as the Proton donor in catalysis.

It belongs to the UbiD family. In terms of assembly, homohexamer. Prenylated FMN serves as cofactor. Requires Mn(2+) as cofactor.

The protein localises to the cell membrane. The catalysed reaction is a 4-hydroxy-3-(all-trans-polyprenyl)benzoate + H(+) = a 2-(all-trans-polyprenyl)phenol + CO2. The protein operates within cofactor biosynthesis; ubiquinone biosynthesis. Catalyzes the decarboxylation of 3-octaprenyl-4-hydroxy benzoate to 2-octaprenylphenol, an intermediate step in ubiquinone biosynthesis. This is 3-octaprenyl-4-hydroxybenzoate carboxy-lyase from Colwellia psychrerythraea (strain 34H / ATCC BAA-681) (Vibrio psychroerythus).